We begin with the raw amino-acid sequence, 779 residues long: Pre-mRNA-splicing factor cef-1 (779 aa).

2 consecutive HTH myb-type domains span residues 1-56 and 57-106; these read MPVV…DPSI and KKIE…DEAE. 2 consecutive DNA-binding regions (H-T-H motif) follow at residues 29-52 and 80-102; these read WARV…NEWL and WRTI…QRLL. Disordered regions lie at residues 113–192, 246–284, 424–448, and 497–525; these read LGLT…ESRR, EYQR…PSVQ, TPLR…LRTP, and WELE…DRRE. Over residues 127-152 the composition is skewed to basic and acidic residues; sequence SADDVRKLRPGEVDPDPETKPARPDT. Residues 157 to 204 adopt a coiled-coil conformation; sequence EDEKEMLSEARARLANTQGKKAKRKARERQQEESRRLAALQKRRELKT. Composition is skewed to basic and acidic residues over residues 246–256 and 263–281; these read EYQRAHFDPKK and RKGE…DKDP. The stretch at 653 to 772 forms a coiled coil; that stretch reads DEEEEQISTM…EELDALTLNG (120 aa).

The protein belongs to the CEF1 family. As to quaternary structure, associated with the spliceosome.

Its subcellular location is the cytoplasm. It localises to the nucleus. Involved in pre-mRNA splicing and cell cycle control. This is Pre-mRNA-splicing factor cef-1 (cef-1) from Neurospora crassa (strain ATCC 24698 / 74-OR23-1A / CBS 708.71 / DSM 1257 / FGSC 987).